Consider the following 192-residue polypeptide: Fe/S biogenesis protein NfuA (192 aa).

2 residues coordinate [4Fe-4S] cluster: cysteine 149 and cysteine 152.

This sequence belongs to the NfuA family. Homodimer. [4Fe-4S] cluster serves as cofactor.

In terms of biological role, involved in iron-sulfur cluster biogenesis. Binds a 4Fe-4S cluster, can transfer this cluster to apoproteins, and thereby intervenes in the maturation of Fe/S proteins. Could also act as a scaffold/chaperone for damaged Fe/S proteins. The polypeptide is Fe/S biogenesis protein NfuA (Shewanella piezotolerans (strain WP3 / JCM 13877)).